We begin with the raw amino-acid sequence, 554 residues long: Glucose-6-phosphate isomerase (554 aa).

The active-site Proton donor is the Glu359. Residues His390 and Lys518 contribute to the active site.

It belongs to the GPI family.

It localises to the cytoplasm. The catalysed reaction is alpha-D-glucose 6-phosphate = beta-D-fructose 6-phosphate. It participates in carbohydrate biosynthesis; gluconeogenesis. The protein operates within carbohydrate degradation; glycolysis; D-glyceraldehyde 3-phosphate and glycerone phosphate from D-glucose: step 2/4. Catalyzes the reversible isomerization of glucose-6-phosphate to fructose-6-phosphate. The chain is Glucose-6-phosphate isomerase from Pseudomonas putida (strain W619).